The sequence spans 559 residues: MGSFRSGVFALSFVVLLLDYFAPAQAASKAIVCQEITVPMCKGIGYNHTYMPNQFNHDTQDEAGMEVHQFWPLVVIQCSLDLKFFLCSMYTPICLPDYRKPLPPCRSVCERAKAGCSPLMRKYGFAWPERMNCDRLPEHGDPDTLCMYYNWTETTTTLPPTHPPKVKTPTSDCDGVCKCREPFVSITRESHPLYNRIKTGQVPNCAMPCFQPYFTQDEKMFVTFWIGLWSILCFISTFTTVATFLIDMERFRYPERPIIFLSACYLFVSIGYVVRLIVGHENVACNKDHIHYETTGPALCTIVFLLIYFFGMASSIWWVILTFTWFLAAGMKWGNEAIASYSQYFHMAAWLIPSVKSIAVLALSSVDGDPVAGICYVGNQNLDNLRGFVLAPLVVYLFSGTMFLLAGFVSLFRIRSVIKQGGTKTDKLEKLMIRIGIFSVLYTVPATIVVACYIYEQHYREHWEKTHNCSCPGDKQRYRPDYAVFMLKYLMCLVVGITSGVWIWSGKTLESWKRFTGRCCRNSKPINASAYSEASRALTPRTGLSNLTLPHKQVPLSHV.

The signal sequence occupies residues M1–A26. Residues A27–M220 lie on the Extracellular side of the membrane. The FZ domain maps to S28–Y149. 5 disulfide bridges follow: C33–C94, C41–C87, C78–C116, C105–C146, and C109–C133. N-linked (GlcNAc...) asparagine glycosylation is present at N47. A glycan (N-linked (GlcNAc...) asparagine) is linked at N150. The helical transmembrane segment at F221–V241 threads the bilayer. Residues A242–P257 are Cytoplasmic-facing. The chain crosses the membrane as a helical span at residues I258–V278. At G279–T301 the chain is on the extracellular side. The helical transmembrane segment at I302–T322 threads the bilayer. Over F323–Q343 the chain is Cytoplasmic. The helical transmembrane segment at Y344 to S364 threads the bilayer. Topologically, residues S365–G387 are extracellular. The helical transmembrane segment at F388–F408 threads the bilayer. Over V409–R434 the chain is Cytoplasmic. Residues I435–Y455 traverse the membrane as a helical segment. The Extracellular portion of the chain corresponds to E456–A483. N468 carries N-linked (GlcNAc...) asparagine glycosylation. The chain crosses the membrane as a helical span at residues V484–W504. The Cytoplasmic segment spans residues S505–V559. A Lys-Thr-X-X-X-Trp motif, mediates interaction with the PDZ domain of Dvl family members motif is present at residues K507–W512. Positions S557–V559 match the PDZ-binding motif.

This sequence belongs to the G-protein coupled receptor Fz/Smo family. Expressed in retina.

The protein localises to the cell membrane. It is found in the golgi apparatus membrane. Its function is as follows. Receptor for Wnt proteins that functions in the canonical Wnt/beta-catenin signaling pathway. The canonical Wnt/beta-catenin signaling pathway leads to the activation of disheveled proteins, inhibition of GSK-3 kinase, nuclear accumulation of beta-catenin and activation of Wnt target genes. A second signaling pathway involving PKC and calcium fluxes has been seen for some family members, but it is not yet clear if it represents a distinct pathway or if it can be integrated in the canonical pathway, as PKC seems to be required for Wnt-mediated inactivation of GSK-3 kinase. Both pathways seem to involve interactions with G-proteins. May be involved in transduction and intercellular transmission of polarity information during tissue morphogenesis and/or in differentiated tissues. The protein is Frizzled-5 (fzd5) of Xenopus laevis (African clawed frog).